The following is a 758-amino-acid chain: UPF0313 protein CV_1738 (758 aa).

One can recognise a Radical SAM core domain in the interval 377 to 642 (AWEMIKYSVN…VDVVRDGYRR (266 aa)). 3 residues coordinate [4Fe-4S] cluster: Cys391, Cys395, and Cys398. The disordered stretch occupies residues 698–758 (GAPMNRGKSP…KPGGKTSRSR (61 aa)). A compositionally biased stretch (gly residues) spans 727 to 737 (RGQGGQGGRPG).

It belongs to the UPF0313 family. It depends on [4Fe-4S] cluster as a cofactor.

In Chromobacterium violaceum (strain ATCC 12472 / DSM 30191 / JCM 1249 / CCUG 213 / NBRC 12614 / NCIMB 9131 / NCTC 9757 / MK), this protein is UPF0313 protein CV_1738.